The sequence spans 637 residues: MKVKAPILLLFVFLINFCFSIKQTQQQNFDITIDNNNYNNNNNNNKNEIINNNNKNNNNLNDEYFEKLGYDTNGTKCDICKFGINQVQKMIASKQGIEDISKYAIDLCTYLHIEKAEVCNGLIPLFANMTYNVLSYPTVTGEYVCGFVGFCPYVPRNSSNIINFPKPKPPHVPPVAPSPNSPTMKILHISDIHVDPVYESGMNADCGEPLCCRAPNGPGVGEKAAGEWGHYLCDINMKMVESMFEFIDQEFGEDIDIVFWTGDNPPHDIWEQTYDSQINASQLVTNLVKKYFGSTAKVFPAIGNHESLPVNSFPLPPGSSWIFNALSYDWSDWVNVDEQVANLQYGGYYTLPVQSGLRVISLNMNWCNNGNLYLAENSTDPANMLQWIVDTLQASEDIGEKVYLVGHIPPGIPDCIDSWSEQLLQIVNRYEDTILASFYGHTHRDEFSVYYTQSDENDPSSPMRASNVIYTTPSVTTYQHQNPSFRIFTVDSNTGYLMESSTYHTDLSQANLNGKPTWLLEYNTTNTYNIPNLTPISMDLAIQNINSSNSMLEDYHVHYYSASPYPESKPCTSISCKLDYICKMKSAAYLKYYECIHHEVNNYLLNESDDDSIKSHKKLNILLDLNNYLNNEVLKSC.

The first 20 residues, 1–20 (MKVKAPILLLFVFLINFCFS), serve as a signal peptide directing secretion. Asn-73 carries N-linked (GlcNAc...) asparagine glycosylation. A Saposin B-type domain is found at 73-155 (NGTKCDICKF…GFVGFCPYVP (83 aa)). 3 disulfide bridges follow: Cys-77–Cys-151, Cys-80–Cys-145, and Cys-108–Cys-119. N-linked (GlcNAc...) asparagine glycosylation is found at Asn-128 and Asn-157. Zn(2+)-binding residues include Asp-191 and His-193. Cys-212 and Cys-233 form a disulfide bridge. Position 263 (Asp-263) interacts with Zn(2+). Asn-279 carries N-linked (GlcNAc...) asparagine glycosylation. Position 304 (Asn-304) interacts with Zn(2+). Asn-377 carries N-linked (GlcNAc...) asparagine glycosylation. The Zn(2+) site is built by His-407, His-441, and His-443. N-linked (GlcNAc...) asparagine glycosylation is found at Asn-523 and Asn-546. Cys-582 and Cys-595 are oxidised to a cystine. Asn-606 carries an N-linked (GlcNAc...) asparagine glycan.

This sequence belongs to the acid sphingomyelinase family. Zn(2+) is required as a cofactor.

The protein localises to the secreted. Its function is as follows. Converts sphingomyelin to ceramide. In Dictyostelium discoideum (Social amoeba), this protein is Sphingomyelin phosphodiesterase B (sgmB).